Consider the following 366-residue polypeptide: DNA double-strand break repair protein Mre11 (366 aa).

Mn(2+) is bound by residues Asp-8, His-10, Asp-49, and Asn-84. The active-site Proton donor is the His-85. Residues His-158, His-186, and His-188 each coordinate Mn(2+).

It belongs to the MRE11/RAD32 family. In terms of assembly, homodimer. Forms a heterotetramer composed of two Mre11 subunits and two Rad50 subunits. Mn(2+) is required as a cofactor.

With respect to regulation, nuclease activity is regulated by Rad50. Part of the Rad50/Mre11 complex, which is involved in the early steps of DNA double-strand break (DSB) repair. The complex may facilitate opening of the processed DNA ends to aid in the recruitment of HerA and NurA. Mre11 binds to DSB ends and has both double-stranded 3'-5' exonuclease activity and single-stranded endonuclease activity. In Methanocaldococcus jannaschii (strain ATCC 43067 / DSM 2661 / JAL-1 / JCM 10045 / NBRC 100440) (Methanococcus jannaschii), this protein is DNA double-strand break repair protein Mre11.